The sequence spans 517 residues: Type II methyltransferase M.CeqI (517 aa).

2 disordered regions span residues 1-21 (MVVTSSAGCASRPRGRGRWPR) and 33-62 (GRPRRPFLRPTVPGPTSARPRRGRAPHGRS). The segment covering 51–62 (RPRRGRAPHGRS) has biased composition (basic residues). TPR repeat units follow at residues 283-316 (AEFYFRLGESYFAHHQYTFAVSYLEQAIDLFENN), 361-394 (ALLLRALGLNRVRQRKLYEAEMYFAEALTIGDHS), and 476-509 (SELAEEIAEYYKQQSLLEKAFYYMKEALHYRTNM).

The enzyme catalyses a 2'-deoxyadenosine in DNA + S-adenosyl-L-methionine = an N(6)-methyl-2'-deoxyadenosine in DNA + S-adenosyl-L-homocysteine + H(+). Its function is as follows. A methylase, recognizes the double-stranded sequence 5'-GATATC-3', methylates A-? on both strands, and protects the DNA from cleavage by the CeqI endonuclease. In Rhodococcus hoagii (Corynebacterium equii), this protein is Type II methyltransferase M.CeqI (ceqIM).